The chain runs to 101 residues: Large ribosomal subunit protein uL24 (101 aa).

The protein belongs to the universal ribosomal protein uL24 family. As to quaternary structure, part of the 50S ribosomal subunit.

Its function is as follows. One of two assembly initiator proteins, it binds directly to the 5'-end of the 23S rRNA, where it nucleates assembly of the 50S subunit. Functionally, one of the proteins that surrounds the polypeptide exit tunnel on the outside of the subunit. The polypeptide is Large ribosomal subunit protein uL24 (Ruegeria sp. (strain TM1040) (Silicibacter sp.)).